Reading from the N-terminus, the 185-residue chain is Large ribosomal subunit protein bL25 (185 aa).

Belongs to the bacterial ribosomal protein bL25 family. CTC subfamily. In terms of assembly, part of the 50S ribosomal subunit; part of the 5S rRNA/L5/L18/L25 subcomplex. Contacts the 5S rRNA. Binds to the 5S rRNA independently of L5 and L18.

Its function is as follows. This is one of the proteins that binds to the 5S RNA in the ribosome where it forms part of the central protuberance. The protein is Large ribosomal subunit protein bL25 of Microcystis aeruginosa (strain NIES-843 / IAM M-2473).